The chain runs to 437 residues: tRNA-queuosine alpha-mannosyltransferase (437 aa).

Belongs to the glycosyltransferase group 1 family. Glycosyltransferase 4 subfamily.

It localises to the cytoplasm. Its subcellular location is the nucleus. The catalysed reaction is queuosine(34) in tRNA(Asp) + GDP-alpha-D-mannose = O-4''-alpha-D-mannosylqueuosine(34) in tRNA(Asp) + GDP + H(+). In terms of biological role, glycosyltransferase that specifically catalyzes mannosylation of cytoplasmic tRNA(Asp) modified with queuosine at position 34 (queuosine(34)). Mannosylates the cyclopentene moiety of queuosine(34) in tRNA(Asp) to form mannosyl-queuosine(34). Mannosylation of queuosine(34) in tRNA(Asp) is required to slow-down elongation at cognate codons, GAC and GAU, thereby regulating protein translation. The chain is tRNA-queuosine alpha-mannosyltransferase (gtdc1) from Xenopus laevis (African clawed frog).